A 121-amino-acid chain; its full sequence is Protein YxiB (121 aa).

The polypeptide is Protein YxiB (yxiB) (Bacillus subtilis (strain 168)).